Reading from the N-terminus, the 335-residue chain is Expansin-like protein 3 (335 aa).

A signal peptide spans 1–20 (MKFNTIFLVLSIVKFILISA). Residues 21–314 (QSCPFSQSII…LNENENIESN (294 aa)) are Extracellular-facing. Positions 43–143 (AGNCGFEKLN…VKVPCEVSGN (101 aa)) constitute an Expansin-like EG45 domain. 2 cysteine pairs are disulfide-bonded: Cys46-Cys76 and Cys79-Cys138. A glycan (N-linked (GlcNAc...) asparagine) is linked at Asn87. The segment at 247-276 (YKPQTFNSQQTSNNQNSNTQTPTKQPSPNS) is disordered. Residues 249–272 (PQTFNSQQTSNNQNSNTQTPTKQP) are compositionally biased toward low complexity. Residues 315 to 335 (SLKLLPNFLLLILIILLNINF) form a helical membrane-spanning segment.

This sequence belongs to the expansin family. Expansin A subfamily.

The protein resides in the membrane. Its function is as follows. May serve to lubricate the movement of the cellulose microfibrils during cell growth and wall extension and/or may serve to maintain the fluid state of the slug cell wall. This Dictyostelium discoideum (Social amoeba) protein is Expansin-like protein 3 (expl3).